The chain runs to 502 residues: Probable cytosol aminopeptidase (502 aa).

2 residues coordinate Mn(2+): Lys-258 and Asp-263. Lys-270 is an active-site residue. Mn(2+) contacts are provided by Asp-281, Asp-340, and Glu-342. Residue Arg-344 is part of the active site.

This sequence belongs to the peptidase M17 family. The cofactor is Mn(2+).

It is found in the cytoplasm. It carries out the reaction Release of an N-terminal amino acid, Xaa-|-Yaa-, in which Xaa is preferably Leu, but may be other amino acids including Pro although not Arg or Lys, and Yaa may be Pro. Amino acid amides and methyl esters are also readily hydrolyzed, but rates on arylamides are exceedingly low.. It catalyses the reaction Release of an N-terminal amino acid, preferentially leucine, but not glutamic or aspartic acids.. Functionally, presumably involved in the processing and regular turnover of intracellular proteins. Catalyzes the removal of unsubstituted N-terminal amino acids from various peptides. This Clavibacter michiganensis subsp. michiganensis (strain NCPPB 382) protein is Probable cytosol aminopeptidase.